Reading from the N-terminus, the 90-residue chain is MKKVLVKAVHCYQRWISPALPPACRYYPTCSNYMIQAIEKHGPDKGLAMGTARILRCHPFCQPGYDLVPEHFSLRRNWAEPEKKEEEDSK.

This sequence belongs to the UPF0161 family.

The protein resides in the cell membrane. Its function is as follows. Could be involved in insertion of integral membrane proteins into the membrane. The protein is Putative membrane protein insertion efficiency factor of Lactococcus lactis subsp. cremoris (strain MG1363).